Consider the following 395-residue polypeptide: N5-carboxyaminoimidazole ribonucleotide synthase (395 aa).

ATP-binding positions include Lys109, Lys149, 184-187 (EEFI), Glu192, and 268-269 (NE). Residues 113–298 (RQLLTRLGLP…QFEQQLRAIA (186 aa)) enclose the ATP-grasp domain.

This sequence belongs to the PurK/PurT family. Homodimer.

The enzyme catalyses 5-amino-1-(5-phospho-beta-D-ribosyl)imidazole + hydrogencarbonate + ATP = 5-carboxyamino-1-(5-phospho-D-ribosyl)imidazole + ADP + phosphate + 2 H(+). Its pathway is purine metabolism; IMP biosynthesis via de novo pathway; 5-amino-1-(5-phospho-D-ribosyl)imidazole-4-carboxylate from 5-amino-1-(5-phospho-D-ribosyl)imidazole (N5-CAIR route): step 1/2. Functionally, catalyzes the ATP-dependent conversion of 5-aminoimidazole ribonucleotide (AIR) and HCO(3)(-) to N5-carboxyaminoimidazole ribonucleotide (N5-CAIR). The protein is N5-carboxyaminoimidazole ribonucleotide synthase of Synechococcus elongatus (strain ATCC 33912 / PCC 7942 / FACHB-805) (Anacystis nidulans R2).